A 194-amino-acid polypeptide reads, in one-letter code: MRESSQIRETTETKIKLSLQLDDGKNVSVRTGVGFFDHMLTLFARHGRFGLQVEAEGDVFVDAHHTVEDVGIVLGNCLKEALHSKEGINRYGSAYVPMDESLGFVAIDISGRSYIVFQGELTNPKLGDFDTELTEEFFRAVAHAANITLHARILYGSNTHHKIEALFKAFGRALREAVERNANITGVNSTKGML.

This sequence belongs to the imidazoleglycerol-phosphate dehydratase family.

It is found in the cytoplasm. It carries out the reaction D-erythro-1-(imidazol-4-yl)glycerol 3-phosphate = 3-(imidazol-4-yl)-2-oxopropyl phosphate + H2O. It participates in amino-acid biosynthesis; L-histidine biosynthesis; L-histidine from 5-phospho-alpha-D-ribose 1-diphosphate: step 6/9. In Bacillus cereus (strain AH187), this protein is Imidazoleglycerol-phosphate dehydratase.